The chain runs to 701 residues: Triadin (701 aa).

The segment at 1 to 28 is disordered; sequence MTEITAEGNASTTTTVIDSKNGSVPKSP. The Cytoplasmic segment spans residues 1–47; it reads MTEITAEGNASTTTTVIDSKNGSVPKSPGKVLKRTVTEDIVTTFSSP. Residues 8–24 are compositionally biased toward polar residues; that stretch reads GNASTTTTVIDSKNGSV. The chain crosses the membrane as a helical span at residues 48–68; that stretch reads AAWLLVIALIITWSAVAVVMF. The Lumenal portion of the chain corresponds to 69-701; it reads DLVDYKNFSA…SSPGQKQQGQ (633 aa). Residue Asn75 is glycosylated (N-linked (GlcNAc...) asparagine). The segment covering 117–130 has biased composition (acidic residues); sequence DGDEDDDDGDEDTD. Disordered regions lie at residues 117 to 256, 273 to 654, and 676 to 701; these read DGDE…KHEQ, GDLR…TKRQ, and FPVT…QQGQ. Composition is skewed to basic and acidic residues over residues 131-256, 303-351, 365-385, 391-426, 437-485, and 492-643; these read KGEI…KHEQ, EGKE…KAPE, AKKD…EEHP, EKKE…KEET, GKKE…EVKP, and VKKE…KAKE. A glycan (N-linked (GlcNAc...) asparagine) is linked at Asn617. A compositionally biased stretch (low complexity) spans 684–701; sequence PGESSGQPSSPGQKQQGQ.

In terms of assembly, homooligomer of variable subunit number; disulfide-linked. Interacts with CASQ1 and RYR1 in skeletal muscle. Interacts with CASQ2. Phosphorylated by CaMK2. In terms of processing, N-glycosylated. As to expression, detected in heart (at protein level). Skeletal and cardiac muscle.

The protein resides in the sarcoplasmic reticulum membrane. Functionally, contributes to the regulation of lumenal Ca2+ release via the sarcoplasmic reticulum calcium release channels RYR1 and RYR2, a key step in triggering skeletal and heart muscle contraction. Required for normal organization of the triad junction, where T-tubules and the sarcoplasmic reticulum terminal cisternae are in close contact. Required for normal skeletal muscle strength. Plays a role in excitation-contraction coupling in the heart and in regulating the rate of heart beats. The sequence is that of Triadin (TRDN) from Canis lupus familiaris (Dog).